Here is a 345-residue protein sequence, read N- to C-terminus: MMFAYLPPDLESEILSRVPATFLKELQTTCKRWYALFRDPIFVKKNLGKAATHVIFNNLGDYSVTEMNTLVHSINLRGIQNSFDPSIGVERKLYELNDPEHDKILGIISHCDGLLLCATKDKTRLVVWNPCTGQTRWIQIKNVFKNNPQLILLVIKFKIYEFNSDSWRILDDISPVCFIRSNGVNLKGNAYFVASDKESKFILKFDFTTERFLRLSFPSQNDDQIAVLSVVRQEKLALLQQRFDTSSIKMNIWVTKTKIDADKDLSWSNFLVVDFGKVTLTSEPLSFLVDEENKMVVCSSKIRHIERKTIIYFAKEGIQVHQEIAQKPKGCCSFLVSYVPSLVQF.

Residues 1–46 form the F-box domain; it reads MMFAYLPPDLESEILSRVPATFLKELQTTCKRWYALFRDPIFVKKN.

The protein is Putative F-box protein At3g17265 of Arabidopsis thaliana (Mouse-ear cress).